Here is a 757-residue protein sequence, read N- to C-terminus: MTSGSVFFYILIFGKYFSHGGGQDVKCSLGYFPCGNITKCLPQLLHCNGVDDCGNQADEDNCGDNNGWSLQFDKYFASYYKMTSQYPFEAETPECLVGSVPVQCLCQGLELDCDETNLRAVPSVSSNVTAMSLQWNLIRKLPPDCFKNYHDLQKLYLQNNKITSISIYAFRGLNSLTKLYLSHNRITFLKPGVFEDLHRLEWLIIEDNHLSRISPPTFYGLNSLILLVLMNNVLTRLPDKPLCQHMPRLHWLDLEGNHIHNLRNLTFISCSNLTVLVMRKNKINHLNENTFAPLQKLDELDLGSNKIENLPPLIFKDLKELSQLNLSYNPIQKIQANQFDYLVKLKSLSLEGIEISNIQQRMFRPLMNLSHIYFKKFQYCGYAPHVRSCKPNTDGISSLENLLASIIQRVFVWVVSAVTCFGNIFVICMRPYIRSENKLYAMSIISLCCADCLMGIYLFVIGGFDLKFRGEYNKHAQLWMESTHCQLVGSLAILSTEVSVLLLTFLTLEKYICIVYPFRCVRPGKCRTITVLILIWITGFIVAFIPLSNKEFFKNYYGTNGVCFPLHSEDTESIGAQIYSVAIFLGINLAAFIIIVFSYGSMFYSVHQSAITATEIRNQVKKEMILAKRFFFIVFTDALCWIPIFVVKFLSLLQVEIPGTITSWVVIFILPINSALNPILYTLTTRPFKEMIHRFWYNYRQRKSMDSKGQKTYAPSFIWVEMWPLQEMPPELMKPDLFTYPCEMSLISQSTRLNSYS.

Topologically, residues 1-409 are extracellular; it reads MTSGSVFFYI…ENLLASIIQR (409 aa). Positions 26–63 constitute an LDL-receptor class A domain; the sequence is KCSLGYFPCGNITKCLPQLLHCNGVDDCGNQADEDNCG. Intrachain disulfides connect cysteine 27-cysteine 40, cysteine 34-cysteine 53, and cysteine 47-cysteine 62. Asparagine 36 carries N-linked (GlcNAc...) asparagine glycosylation. Ca(2+)-binding residues include leucine 45, asparagine 48, valine 50, aspartate 52, aspartate 58, and glutamate 59. The region spanning 91–127 is the LRRNT domain; it reads ETPECLVGSVPVQCLCQGLELDCDETNLRAVPSVSSN. Asparagine 127 carries an N-linked (GlcNAc...) asparagine glycan. LRR repeat units lie at residues 151–172, 175–196, 199–220, 223–244, 248–269, 272–293, 296–317, 320–341, and 344–365; these read DLQK…AFRG, SLTK…VFED, RLEW…TFYG, SLIL…PLCQ, RLHW…TFIS, NLTV…TFAP, KLDE…IFKD, ELSQ…QFDY, and KLKS…MFRP. N-linked (GlcNAc...) asparagine glycosylation is found at asparagine 264 and asparagine 272. Residue asparagine 325 is glycosylated (N-linked (GlcNAc...) asparagine). Asparagine 368 is a glycosylation site (N-linked (GlcNAc...) asparagine). A helical transmembrane segment spans residues 410-430; the sequence is VFVWVVSAVTCFGNIFVICMR. Topologically, residues 431 to 443 are cytoplasmic; it reads PYIRSENKLYAMS. A helical membrane pass occupies residues 444 to 464; sequence IISLCCADCLMGIYLFVIGGF. The Extracellular segment spans residues 465 to 486; sequence DLKFRGEYNKHAQLWMESTHCQ. A disulfide bond links cysteine 485 and cysteine 563. A helical transmembrane segment spans residues 487–507; it reads LVGSLAILSTEVSVLLLTFLT. At 508 to 527 the chain is on the cytoplasmic side; the sequence is LEKYICIVYPFRCVRPGKCR. Residues 528-548 traverse the membrane as a helical segment; that stretch reads TITVLILIWITGFIVAFIPLS. Over 549 to 577 the chain is Extracellular; sequence NKEFFKNYYGTNGVCFPLHSEDTESIGAQ. The helical transmembrane segment at 578–598 threads the bilayer; the sequence is IYSVAIFLGINLAAFIIIVFS. The Cytoplasmic segment spans residues 599–629; sequence YGSMFYSVHQSAITATEIRNQVKKEMILAKR. Residues 630-650 form a helical membrane-spanning segment; the sequence is FFFIVFTDALCWIPIFVVKFL. A topological domain (extracellular) is located at residue serine 651. The helical transmembrane segment at 652–672 threads the bilayer; it reads LLQVEIPGTITSWVVIFILPI. Topologically, residues 673 to 757 are cytoplasmic; it reads NSALNPILYT…SQSTRLNSYS (85 aa).

The protein belongs to the G-protein coupled receptor 1 family. Interacts with C1QTNF8. In terms of tissue distribution, expressed in the brain, kidney, testis, placenta, uterus, ovary, adrenal, prostate, skin and heart. Not detected in spleen.

It localises to the cell membrane. Receptor for relaxins. The activity of this receptor is mediated by G proteins leading to stimulation of adenylate cyclase and an increase of cAMP. Binding of the ligand may also activate a tyrosine kinase pathway that inhibits the activity of a phosphodiesterase that degrades cAMP. In Homo sapiens (Human), this protein is Relaxin receptor 1 (RXFP1).